Here is a 321-residue protein sequence, read N- to C-terminus: Anthranilate phosphoribosyltransferase (321 aa).

Residues glycine 72, 75-76, threonine 80, 82-85, 99-107, and serine 111 each bind 5-phospho-alpha-D-ribose 1-diphosphate; these read GD, NVST, and KHGNVSITS. Glycine 72 is a binding site for anthranilate. Serine 84 provides a ligand contact to Mg(2+). Position 102 (asparagine 102) interacts with anthranilate. Residue arginine 157 coordinates anthranilate. Residues aspartate 216 and glutamate 217 each coordinate Mg(2+).

Belongs to the anthranilate phosphoribosyltransferase family. In terms of assembly, homodimer. Mg(2+) serves as cofactor.

The catalysed reaction is N-(5-phospho-beta-D-ribosyl)anthranilate + diphosphate = 5-phospho-alpha-D-ribose 1-diphosphate + anthranilate. The protein operates within amino-acid biosynthesis; L-tryptophan biosynthesis; L-tryptophan from chorismate: step 2/5. In terms of biological role, catalyzes the transfer of the phosphoribosyl group of 5-phosphorylribose-1-pyrophosphate (PRPP) to anthranilate to yield N-(5'-phosphoribosyl)-anthranilate (PRA). The polypeptide is Anthranilate phosphoribosyltransferase (Methanococcus maripaludis (strain C6 / ATCC BAA-1332)).